The following is a 333-amino-acid chain: tRNA-modifying protein YgfZ (333 aa).

Folate is bound by residues W33 and W195.

It belongs to the tRNA-modifying YgfZ family.

It is found in the cytoplasm. Its function is as follows. Folate-binding protein involved in regulating the level of ATP-DnaA and in the modification of some tRNAs. It is probably a key factor in regulatory networks that act via tRNA modification, such as initiation of chromosomal replication. The sequence is that of tRNA-modifying protein YgfZ from Pectobacterium carotovorum subsp. carotovorum (strain PC1).